Consider the following 411-residue polypeptide: Ribose-phosphate pyrophosphokinase 3, chloroplastic (411 aa).

A chloroplast-targeting transit peptide spans 1 to 39 (MAAISPANATTAASLSLPQFSSTSSSLSSSSSPSFLNFK). Asp-231 and His-233 together coordinate Mg(2+). The tract at residues 314-329 (GRHVVIVDDLVQSGGT) is binding of phosphoribosylpyrophosphate.

Belongs to the ribose-phosphate pyrophosphokinase family.

It localises to the plastid. It is found in the chloroplast. The enzyme catalyses D-ribose 5-phosphate + ATP = 5-phospho-alpha-D-ribose 1-diphosphate + AMP + H(+). This Arabidopsis thaliana (Mouse-ear cress) protein is Ribose-phosphate pyrophosphokinase 3, chloroplastic (PRS3).